Consider the following 421-residue polypeptide: Serine hydroxymethyltransferase (421 aa).

(6S)-5,6,7,8-tetrahydrofolate contacts are provided by residues leucine 121 and 125-127 (GHL). Lysine 229 bears the N6-(pyridoxal phosphate)lysine mark.

Belongs to the SHMT family. Homodimer. Pyridoxal 5'-phosphate is required as a cofactor.

It is found in the cytoplasm. It catalyses the reaction (6R)-5,10-methylene-5,6,7,8-tetrahydrofolate + glycine + H2O = (6S)-5,6,7,8-tetrahydrofolate + L-serine. The protein operates within one-carbon metabolism; tetrahydrofolate interconversion. Its pathway is amino-acid biosynthesis; glycine biosynthesis; glycine from L-serine: step 1/1. Catalyzes the reversible interconversion of serine and glycine with tetrahydrofolate (THF) serving as the one-carbon carrier. This reaction serves as the major source of one-carbon groups required for the biosynthesis of purines, thymidylate, methionine, and other important biomolecules. Also exhibits THF-independent aldolase activity toward beta-hydroxyamino acids, producing glycine and aldehydes, via a retro-aldol mechanism. This is Serine hydroxymethyltransferase from Haemophilus influenzae (strain ATCC 51907 / DSM 11121 / KW20 / Rd).